A 125-amino-acid chain; its full sequence is Small ribosomal subunit protein uS17 (125 aa).

2 disordered regions span residues 1–21 (MSSS…VSSR) and 101–125 (VAAQ…APQA).

It belongs to the universal ribosomal protein uS17 family. As to quaternary structure, part of the 30S ribosomal subunit.

One of the primary rRNA binding proteins, it binds specifically to the 5'-end of 16S ribosomal RNA. In Opitutus terrae (strain DSM 11246 / JCM 15787 / PB90-1), this protein is Small ribosomal subunit protein uS17.